A 92-amino-acid chain; its full sequence is Isoleucine--tRNA ligase (92 aa).

4 residues coordinate Zn(2+): Cys55, Cys58, Cys75, and Cys78.

Belongs to the class-I aminoacyl-tRNA synthetase family. IleS type 1 subfamily. As to quaternary structure, monomer. Requires Zn(2+) as cofactor.

Its subcellular location is the cytoplasm. The enzyme catalyses tRNA(Ile) + L-isoleucine + ATP = L-isoleucyl-tRNA(Ile) + AMP + diphosphate. Its function is as follows. Catalyzes the attachment of isoleucine to tRNA(Ile). As IleRS can inadvertently accommodate and process structurally similar amino acids such as valine, to avoid such errors it has two additional distinct tRNA(Ile)-dependent editing activities. One activity is designated as 'pretransfer' editing and involves the hydrolysis of activated Val-AMP. The other activity is designated 'posttransfer' editing and involves deacylation of mischarged Val-tRNA(Ile). This is Isoleucine--tRNA ligase (ileS) from Klebsiella aerogenes (Enterobacter aerogenes).